A 370-amino-acid chain; its full sequence is A-type ATP synthase subunit C (370 aa).

The protein belongs to the V-ATPase V0D/AC39 subunit family. As to quaternary structure, has multiple subunits with at least A(3), B(3), C, D, E, F, H, I and proteolipid K(x).

The protein localises to the cell membrane. In terms of biological role, component of the A-type ATP synthase that produces ATP from ADP in the presence of a proton gradient across the membrane. In Pyrococcus furiosus (strain ATCC 43587 / DSM 3638 / JCM 8422 / Vc1), this protein is A-type ATP synthase subunit C.